A 185-amino-acid chain; its full sequence is GTP-binding protein rhb1 (185 aa).

GTP contacts are provided by S16, G18, K19, S20, S21, V32, Y35, T38, N119, D122, and A150. Residue S20 participates in Mg(2+) binding. The Effector region motif lies at Y35–F43. Mg(2+) is bound at residue T38. C182 is subject to Cysteine methyl ester. Residue C182 is the site of S-farnesyl cysteine attachment. The propeptide at V183–A185 is removed in mature form.

Belongs to the small GTPase superfamily. Rheb family.

The protein resides in the cell membrane. The catalysed reaction is GTP + H2O = GDP + phosphate + H(+). Binds GTP and exhibits intrinsic GTPase activity. Regulates entry into stationary phase when extracellular nitrogen levels are adequate for growth. The polypeptide is GTP-binding protein rhb1 (rhb1) (Schizosaccharomyces pombe (strain 972 / ATCC 24843) (Fission yeast)).